We begin with the raw amino-acid sequence, 525 residues long: GMP synthase [glutamine-hydrolyzing] (525 aa).

The Glutamine amidotransferase type-1 domain occupies 9 to 207; the sequence is RILILDFGSQ…VMDICKCEKL (199 aa). Cysteine 86 (nucleophile) is an active-site residue. Residues histidine 181 and glutamate 183 contribute to the active site. The GMPS ATP-PPase domain maps to 208–400; it reads WTAGAIIEDA…LGLPYDMLYR (193 aa). 235 to 241 lines the ATP pocket; it reads SGGVDSS.

Homodimer.

It catalyses the reaction XMP + L-glutamine + ATP + H2O = GMP + L-glutamate + AMP + diphosphate + 2 H(+). The protein operates within purine metabolism; GMP biosynthesis; GMP from XMP (L-Gln route): step 1/1. Its function is as follows. Catalyzes the synthesis of GMP from XMP. This chain is GMP synthase [glutamine-hydrolyzing], found in Alteromonas mediterranea (strain DSM 17117 / CIP 110805 / LMG 28347 / Deep ecotype).